The chain runs to 90 residues: Protein RL8A (90 aa).

A helical membrane pass occupies residues 15 to 34 (WTCEGLLLLLGLLVLFFHHH). Positions 55-90 (HESGWYSSDDDGDRDGDEETGESHNRNSVGLSAVFS) are disordered. A compositionally biased stretch (acidic residues) spans 62–74 (SDDDGDRDGDEET). A compositionally biased stretch (polar residues) spans 80-90 (RNSVGLSAVFS).

It localises to the host membrane. This Homo sapiens (Human) protein is Protein RL8A (RL8A).